The chain runs to 327 residues: 2-methoxy-6-polyprenyl-1,4-benzoquinol methylase, mitochondrial (327 aa).

Residues Met1–Ala49 constitute a mitochondrion transit peptide. S-adenosyl-L-methionine is bound by residues Thr117, Asp171, and Asp199 to Ala200.

The protein belongs to the class I-like SAM-binding methyltransferase superfamily. MenG/UbiE family. In terms of assembly, component of a multi-subunit COQ enzyme complex, composed of at least COQ3, COQ4, COQ5, COQ6, COQ7 and COQ9. Interacts with PYURF; the interaction is direct, stabilizes COQ5 protein and associates PYURF with COQ enzyme complex.

It localises to the mitochondrion inner membrane. It catalyses the reaction 2-methoxy-6-(all-trans-decaprenyl)benzene-1,4-diol + S-adenosyl-L-methionine = 5-methoxy-2-methyl-3-(all-trans-decaprenyl)benzene-1,4-diol + S-adenosyl-L-homocysteine + H(+). Its pathway is cofactor biosynthesis; ubiquinone biosynthesis. Its function is as follows. Methyltransferase required for the conversion of 2-decaprenyl-6-methoxy-1,4-benzoquinol (DDMQH2) to 2-decaprenyl-3-methyl-6-methoxy-1,4-benzoquinol (DMQH2). This Rattus norvegicus (Rat) protein is 2-methoxy-6-polyprenyl-1,4-benzoquinol methylase, mitochondrial.